A 245-amino-acid chain; its full sequence is Eukaryotic translation initiation factor 6 (245 aa).

Belongs to the eIF-6 family. Monomer. Associates with the 60S ribosomal subunit.

The protein resides in the cytoplasm. Its subcellular location is the nucleus. It localises to the nucleolus. Functionally, binds to the 60S ribosomal subunit and prevents its association with the 40S ribosomal subunit to form the 80S initiation complex in the cytoplasm. May also be involved in ribosome biogenesis. The sequence is that of Eukaryotic translation initiation factor 6 from Ostreococcus lucimarinus (strain CCE9901).